The chain runs to 319 residues: Homeobox protein Hox-B5a (319 aa).

The segment at 114 to 224 (SLLSPGSGDT…NTVGSEGQPP (111 aa)) is disordered. Residues 128–155 (RSSSPRSEQSGSGNLSSTNLSSSTNISS) are compositionally biased toward low complexity. The Antp-type hexapeptide motif lies at 226–231 (IFPWMR). Residues 244–303 (GKRARTAYTRYQTLELEKEFHFNRYLTRRRRIEIAHALCLTERQIKIWFQNRRMKWKKDN) constitute a DNA-binding region (homeobox).

It belongs to the Antp homeobox family.

The protein localises to the nucleus. In terms of biological role, sequence-specific transcription factor which is part of a developmental regulatory system that provides cells with specific positional identities on the anterior-posterior axis. The polypeptide is Homeobox protein Hox-B5a (hoxb5a) (Takifugu rubripes (Japanese pufferfish)).